Reading from the N-terminus, the 545-residue chain is Glucose-6-phosphate isomerase (545 aa).

The active-site Proton donor is the Glu-351. Residues His-382 and Lys-510 contribute to the active site.

Belongs to the GPI family.

It localises to the cytoplasm. It carries out the reaction alpha-D-glucose 6-phosphate = beta-D-fructose 6-phosphate. It participates in carbohydrate biosynthesis; gluconeogenesis. Its pathway is carbohydrate degradation; glycolysis; D-glyceraldehyde 3-phosphate and glycerone phosphate from D-glucose: step 2/4. In terms of biological role, catalyzes the reversible isomerization of glucose-6-phosphate to fructose-6-phosphate. This is Glucose-6-phosphate isomerase from Shewanella sp. (strain ANA-3).